We begin with the raw amino-acid sequence, 417 residues long: Odorant receptor Or1 (417 aa).

The Cytoplasmic portion of the chain corresponds to 1–2 (MK). A helical transmembrane segment spans residues 3-23 (LNKLNPRWDAYDRRDSFWLQL). The Extracellular segment spans residues 24–45 (LCLKYLGLWPPEDTDQATRNRY). Residues 46-66 (IAYGWALRIMFLHLYALTQAL) traverse the membrane as a helical segment. Residues 67 to 73 (YFKDVKD) lie on the Cytoplasmic side of the membrane. The chain crosses the membrane as a helical span at residues 74–94 (INDIANALFVLMTQVTLIYKL). The Extracellular portion of the chain corresponds to 95–133 (EKFNYNIARIQACLRKLNCTLYHPKQREEFSPVLQSMSG). The N-linked (GlcNAc...) asparagine glycan is linked to Asn-112. The chain crosses the membrane as a helical span at residues 134–154 (VFWLMIFLMFVAIFTIIMWVM). Topologically, residues 155–178 (SPAFDNERRLPVPAWFPVDYHHSD) are cytoplasmic. A helical membrane pass occupies residues 179–199 (IVYGVLFLYQTIGIVMSATYN). At 200–284 (FSTDTMFSGL…ILSFGDEVQD (85 aa)) the chain is on the extracellular side. Residues 285–305 (IFQGSIFAQVCASVIIICMTL) traverse the membrane as a helical segment. Topologically, residues 306–317 (LQATGDDVTMAD) are cytoplasmic. Residues 318–338 (LLGCGFYLLVMTSQVFIFCYV) traverse the membrane as a helical segment. The Extracellular portion of the chain corresponds to 339 to 417 (GNEISYTTDK…LAVLQSMESE (79 aa)).

The protein belongs to the insect chemoreceptor superfamily. Heteromeric odorant receptor channel (TC 1.A.69) family. Or2a subfamily. As to expression, female-specific antennae and maxillary palp expression.

The protein resides in the cell membrane. Odorant receptor which plays a critical role in the anthropophilic host-seeking behavior; establishes the host preference to transmit malaria. May participate in the phenomenon of decreased host-seeking behavior in disease vector mosquitoes after blood feeding. This Anopheles gambiae (African malaria mosquito) protein is Odorant receptor Or1 (OR1).